Reading from the N-terminus, the 1128-residue chain is MIAVSFKCRCQILRRLTKDESPYTKSASQTKPPDGALAVRRQSIPEEFKGSTVVELMKKEGTTLGLTVSGGIDKDGKPRVSNLRQGGIAARSDQLDVGDYIKAVNGINLAKFRHDEIISLLKNVGERVVLEVEYELPPVSVQGSSVIFRTVEVTLHKEGNTFGFVIRGGAHDDRNKSRPVVITCVRPGGPADREGTIKPGDRLLSVDGIRLLGTTHAEAMSILKQCGQEAALLIEYDVSVMDSVATASGPLLVEVAKTPGASLGVALTTSMCCNKQVIVIDKIKSASIADRCGALHVGDHILSIDGTSMEYCTLAEATQFLANTTDQVKLEILPHHQTRLALKGPDHVKIQRSDRQLTWDSWASNHSSLHTNHHYNTYHPDHCRVPALTFPKAPPPNSPPALVSSSFSPTSMSAYSLSSLNMGTLPRSLYSTSPRGTMMRRRLKKKDFKSSLSLASSTVGLAGQVVHTETTEVVLTADPVTGFGIQLQGSVFATETLSSPPLISYIEADSPAERCGVLQIGDRVMAINGIPTEDSTFEEASQLLRDSSITSKVTLEIEFDVAESVIPSSGTFHVKLPKKHNVELGITISSPSSRKPGDPLVISDIKKGSVAHRTGTLELGDKLLAIDNIRLDNCSMEDAVQILQQCEDLVKLKIRKDEDNSDEQESSGAIIYTVELKRYGGPLGITISGTEEPFDPIIISSLTKGGLAERTGAIHIGDRILAINSSSLKGKPLSEAIHLLQMAGETVTLKIKKQTDAQSASSPKKFPISSHLSDLGDVEEDSSPAQKPGKLSDMYPSTVPSVDSAVDSWDGSAIDTSYGTQGTSFQASGYNFNTYDWRSPKQRGSLSPVTKPRSQTYPDVGLSYEDWDRSTASGFAGAADSAETEQEENFWSQALEDLETCGQSGILRELEEKADRRVSLRNMTLLATIMSGSTMSLNHEAPTPRSQLGRQASFQERSSSRPHYSQTTRSNTLPSDVGRKSVTLRKMKQEIKEIMSPTPVELHKVTLYKDSDMEDFGFSVADGLLEKGVYVKNIRPAGPGDLGGLKPYDRLLQVNHVRTRDFDCCLVVPLIAESGNKLDLVISRNPLASQKSIDQQSLPGDWSEQNSAFFQQPSHGGNLETREPTNTL.

Ser43 carries the post-translational modification Phosphoserine. PDZ domains are found at residues 53–136 (VVEL…EYEL), 150–238 (TVEV…EYDV), 252–336 (LVEV…LPHH), 472–561 (EVVL…EFDV), 573–658 (HVKL…RKDE), and 673–755 (TVEL…KKQT). Disordered stretches follow at residues 754 to 798 (QTDA…YPST) and 935 to 981 (MSLN…GRKS). Positions 944-974 (PRSQLGRQASFQERSSSRPHYSQTTRSNTLP) are enriched in polar residues. In terms of domain architecture, PDZ 7 spans 1004–1086 (KVTLYKDSDM…KLDLVISRNP (83 aa)). Polar residues predominate over residues 1093–1115 (IDQQSLPGDWSEQNSAFFQQPSH). The interval 1093-1128 (IDQQSLPGDWSEQNSAFFQQPSHGGNLETREPTNTL) is disordered.

In terms of assembly, interacts with EPHA7, EPHB2, KIF5A, KIF5B, KIF5C, GRIA2, GRIA3, GRIPAP1/GRASP1, PPFIA1, PPFIA4, FRAS1, PLCD4, PTPRF and liprins-alpha. Can form homomultimers or heteromultimers with GRIP2. Forms a ternary complex with GRIA2 and CSPG4. Interacts with ATAD1 in an ATP-dependent manner. ATAD1-catalyzed ATP hydrolysis disrupts binding to ATAD1 and to GRIA2 and leads to AMPAR complex disassembly. Interacts with EFNB1, EFNB3 and the C-terminal tail of PRLHR. Interacts with SLC30A9. Interacts with BUD23. Forms a complex with NSG1, GRIA2 and STX12; controls the intracellular fate of AMPAR and the endosomal sorting of the GRIA2 subunit toward recycling and membrane targeting. Interacts with NSG1.

The protein resides in the cytoplasmic vesicle. Its subcellular location is the perikaryon. It is found in the cell projection. It localises to the dendrite. The protein localises to the cytoplasm. The protein resides in the endomembrane system. Its subcellular location is the postsynaptic cell membrane. It is found in the postsynaptic density. It localises to the endoplasmic reticulum membrane. In terms of biological role, may play a role as a localized scaffold for the assembly of a multiprotein signaling complex and as mediator of the trafficking of its binding partners at specific subcellular location in neurons. Through complex formation with NSG1, GRIA2 and STX12 controls the intracellular fate of AMPAR and the endosomal sorting of the GRIA2 subunit toward recycling and membrane targeting. This chain is Glutamate receptor-interacting protein 1 (GRIP1), found in Homo sapiens (Human).